The sequence spans 72 residues: EAGEECDCGAPANPCCDAATCKLRPGAQCAEGLCCDQCRFMKEGTVCHRARGDDVDDYCNGISAGCPRNPFH.

Residues 1–72 form the Disintegrin domain; sequence EAGEECDCGA…SAGCPRNPFH (72 aa). 6 disulfides stabilise this stretch: C6–C21, C8–C16, C15–C38, C29–C35, C34–C59, and C47–C66. A Cell attachment site motif is present at residues 51 to 53; the sequence is RGD.

This sequence belongs to the venom metalloproteinase (M12B) family. P-II subfamily. P-IIa sub-subfamily. Monomer. Expressed by the venom gland.

It is found in the secreted. Its function is as follows. Inhibits ADP- (IC(50)=66 nM) and collagen-induced (IC(50)=100 nM) aggregation of human platelets. In vitro, inhibits adhesion of endothelial cells to vitronectin, type-I collagen and, to a lower degree, fibronectin and laminin. The polypeptide is Disintegrin sasaimin (Cerrophidion sasai (Costa Rica montane pitviper)).